A 4144-amino-acid polypeptide reads, in one-letter code: DNA-dependent protein kinase catalytic subunit (4144 aa).

Residue K127 is modified to N6-acetyllysine. Residues 298 to 333 (DNYVSLFEVLSKWCSHTNVEMKKAAHSALESFLKQV) form an HEAT 1 repeat. 3 positions are modified to phosphoserine: S521, S851, and S903. One copy of the HEAT 2 repeat lies at 1014–1050 (QDTVALLETILDGIVDPVDSTLRDFCGRCIREFLKWS). Residue S1075 is modified to Phosphoserine. K1219 is subject to N6-acetyllysine. The interval 1516 to 1551 (LDPSCKRLASGLLELAFAFGGLCEHLVDLLLDTAVL) is interaction with C1D. The leucine-zipper stretch occupies residues 1516–1551 (LDPSCKRLASGLLELAFAFGGLCEHLVDLLLDTAVL). The TPR 1 repeat unit spans residues 1736 to 1769 (PMKSEEFPVGTLRYSNYVDCMKKFLDALELSQSP). K1983 is subject to N6-acetyllysine. S2069 bears the Phosphoserine; by autocatalysis mark. At K2271 the chain carries N6-acetyllysine. The segment at 2448–3228 (LDIIYKMMAK…DHSLSMDEER (781 aa)) is KIP-binding. A Phosphothreonine modification is found at T2547. Residue T2621 is modified to Phosphothreonine; by autocatalysis. S2624 carries the post-translational modification Phosphoserine; by autocatalysis. A phosphothreonine; by autocatalysis mark is found at T2650 and T2659. The tract at residues 2697 to 2729 (AQKRNEKSQRAPLKSVGPDFGEKKLGLPGDKVD) is disordered. The span at 2716-2729 (FGEKKLGLPGDKVD) shows a compositional bias: basic and acidic residues. Residues 2753 to 2781 (EKLSLIYARKGIAEQKREKEIKSELKMKH) form a may split the end of the DNA molecule, with the two strands separating around the region region. Position 2805 is a phosphoserine (S2805). TPR repeat units follow at residues 2903–2935 (PVGV…VSPD), 2936–2964 (VVRW…SEIG), and 2965–2998 (TKQI…EEWV). An FAT domain is found at 2922 to 3555 (PAKQFKGRMR…VYPFIISSES (634 aa)). The residue at position 3221 (S3221) is a Phosphoserine. N6-acetyllysine occurs at positions 3257, 3276, 3654, and 3658. One copy of the TPR 5 repeat lies at 3711–3748 (LRNELEIPGQYDGKGKPLPEYHARIAGFDERIKVMASI). The PI3K/PI4K catalytic domain occupies 3738–4069 (FDERIKVMAS…IHYAKRKLAG (332 aa)). The G-loop stretch occupies residues 3744-3750 (VMASIRK). A phosphoserine mark is found at S3747 and S3837. The segment at 3935–3943 (GIGDRHLNN) is catalytic loop. Positions 3955 to 3980 (GIDFGHAFGSATQFLPVPELMPFRLT) are activation loop. A Phosphoserine modification is found at S4042. An FATC domain is found at 4112–4144 (NGLSEEAQVKCLIDQATDPNILGRTWIGWEPWM).

This sequence belongs to the PI3/PI4-kinase family. As to quaternary structure, DNA-PK is a heterotrimer of PRKDC and the Ku dimer (composed of XRCC6/Ku70 and XRCC5/Ku86). Formation of this complex may be promoted by interaction with ILF3. Component of the core long-range non-homologous end joining (NHEJ) complex (also named DNA-PK complex) composed of PRKDC, LIG4, XRCC4, XRCC6/Ku70, XRCC5/Ku86 and NHEJ1/XLF. Additional component of the NHEJ complex includes PAXX. Following autophosphorylation, PRKDC dissociates from DNA. Interacts with DNA-PKcs-interacting protein (KIP) with the region upstream the kinase domain. PRKDC alone also interacts with and phosphorylates DCLRE1C, thereby activating the latent endonuclease activity of this protein. Interacts with C1D. Interacts with TTI1 and TELO2. Interacts with CIB1. Interacts with SETX. Interacts with NR4A3; the DNA-dependent protein kinase complex DNA-PK phosphorylates and activates NR4A3 and prevents NR4A3 ubiquitination and degradation. Interacts with BRAT1. Part of the HDP-RNP complex composed of at least HEXIM1, PRKDC, XRCC5, XRCC6, paraspeckle proteins (SFPQ, NONO, PSPC1, RBM14, and MATR3) and NEAT1 RNA. Interacts with KAT5. Autophosphorylated at two clusters, the T2609 cluster and the S2056 cluster. Autophosphorylated on Ser-2069, Thr-2621, Thr-2650 and Thr-2659. Ser-2069 and Thr-2621 are DNA damage-inducible phosphorylation sites (inducible with ionizing radiation, IR) dephosphorylated by PPP5C. Autophosphorylation induces a conformational change that leads to remodeling of the DNA-PK complex, requisite for efficient end processing and DNA repair. Autophosphorylation in trans within DNA-PK complexes loaded on DNA ends leads to the dissociation of PRKDC from DNA and the transition into the short-range NHEJ complex. Autophosphorylation of the T2609 cluster is required for hematopoietic development and protein synthesis in erythrocytes precursors. In terms of processing, S-nitrosylated by GAPDH. Post-translationally, polyubiquitinated by RNF144A, leading to proteasomal degradation.

The protein localises to the nucleus. It localises to the nucleolus. Its subcellular location is the cytoplasm. It is found in the cytosol. The enzyme catalyses L-seryl-[protein] + ATP = O-phospho-L-seryl-[protein] + ADP + H(+). The catalysed reaction is L-threonyl-[protein] + ATP = O-phospho-L-threonyl-[protein] + ADP + H(+). Its activity is regulated as follows. Activity seems to be attenuated by autophosphorylation. Binding to the SL1 region of U3 small nucleolar RNA promotes auto-phosphorylation activity. Inhibited by wortmannin. Its function is as follows. Serine/threonine-protein kinase that acts as a molecular sensor for DNA damage. Involved in DNA non-homologous end joining (NHEJ) required for double-strand break (DSB) repair and V(D)J recombination. Must be bound to DNA to express its catalytic properties. Promotes processing of hairpin DNA structures in V(D)J recombination by activation of the hairpin endonuclease artemis (DCLRE1C). Recruited by XRCC5 and XRCC6 to DNA ends and is required to (1) protect and align broken ends of DNA, thereby preventing their degradation, (2) and sequester the DSB for repair by NHEJ. Acts as a scaffold protein to aid the localization of DNA repair proteins to the site of damage. The assembly of the DNA-PK complex at DNA ends is also required for the NHEJ ligation step. Found at the ends of chromosomes, suggesting a further role in the maintenance of telomeric stability and the prevention of chromosomal end fusion. Also involved in modulation of transcription. As part of the DNA-PK complex, involved in the early steps of ribosome assembly by promoting the processing of precursor rRNA into mature 18S rRNA in the small-subunit processome. Binding to U3 small nucleolar RNA, recruits PRKDC and XRCC5/Ku86 to the small-subunit processome. Recognizes the substrate consensus sequence [ST]-Q. Phosphorylates 'Ser-139' of histone variant H2AX, thereby regulating DNA damage response mechanism. Phosphorylates ASF1A, DCLRE1C, c-Abl/ABL1, histone H1, HSPCA, c-jun/JUN, p53/TP53, PARP1, POU2F1, DHX9, FH, SRF, NHEJ1/XLF, XRCC1, XRCC4, XRCC5, XRCC6, WRN, MYC and RFA2. Can phosphorylate C1D not only in the presence of linear DNA but also in the presence of supercoiled DNA. Ability to phosphorylate p53/TP53 in the presence of supercoiled DNA is dependent on C1D. Acts as a regulator of the phosphatidylinositol 3-kinase/protein kinase B signal transduction by mediating phosphorylation of 'Ser-473' of protein kinase B (PKB/AKT1, PKB/AKT2, PKB/AKT3), promoting their activation. Contributes to the determination of the circadian period length by antagonizing phosphorylation of CRY1 'Ser-588' and increasing CRY1 protein stability, most likely through an indirect mechanism. Plays a role in the regulation of DNA virus-mediated innate immune response by assembling into the HDP-RNP complex, a complex that serves as a platform for IRF3 phosphorylation and subsequent innate immune response activation through the cGAS-STING pathway. Also regulates the cGAS-STING pathway by catalyzing phosphorylation of CGAS, thereby impairing CGAS oligomerization and activation. Also regulates the cGAS-STING pathway by mediating phosphorylation of PARP1. This is DNA-dependent protein kinase catalytic subunit (PRKDC) from Canis lupus familiaris (Dog).